A 261-amino-acid polypeptide reads, in one-letter code: Cytochrome c oxidase subunit 3 (261 aa).

6 helical membrane passes run 31–51 (LVLWFHTGNIILLFTGLLLLI), 82–102 (PMILFITSEVCFFFAFFWAFF), 126–146 (PFLVPLLNTAVLLSSGVTITW), 159–179 (AIQALFLTVVLGIYFTILQAW), 197–217 (FFVATGFHGLHVIIGTTFLLV), and 239–259 (AWYWHFVDVVWLFLYVCIYWW).

It belongs to the cytochrome c oxidase subunit 3 family. In terms of assembly, component of the cytochrome c oxidase (complex IV, CIV), a multisubunit enzyme composed of a catalytic core of 3 subunits and several supernumerary subunits. The complex exists as a monomer or a dimer and forms supercomplexes (SCs) in the inner mitochondrial membrane with ubiquinol-cytochrome c oxidoreductase (cytochrome b-c1 complex, complex III, CIII).

The protein resides in the mitochondrion inner membrane. The enzyme catalyses 4 Fe(II)-[cytochrome c] + O2 + 8 H(+)(in) = 4 Fe(III)-[cytochrome c] + 2 H2O + 4 H(+)(out). Component of the cytochrome c oxidase, the last enzyme in the mitochondrial electron transport chain which drives oxidative phosphorylation. The respiratory chain contains 3 multisubunit complexes succinate dehydrogenase (complex II, CII), ubiquinol-cytochrome c oxidoreductase (cytochrome b-c1 complex, complex III, CIII) and cytochrome c oxidase (complex IV, CIV), that cooperate to transfer electrons derived from NADH and succinate to molecular oxygen, creating an electrochemical gradient over the inner membrane that drives transmembrane transport and the ATP synthase. Cytochrome c oxidase is the component of the respiratory chain that catalyzes the reduction of oxygen to water. Electrons originating from reduced cytochrome c in the intermembrane space (IMS) are transferred via the dinuclear copper A center (CU(A)) of subunit 2 and heme A of subunit 1 to the active site in subunit 1, a binuclear center (BNC) formed by heme A3 and copper B (CU(B)). The BNC reduces molecular oxygen to 2 water molecules using 4 electrons from cytochrome c in the IMS and 4 protons from the mitochondrial matrix. This chain is Cytochrome c oxidase subunit 3 (COIII), found in Paracentrotus lividus (Common sea urchin).